The following is a 188-amino-acid chain: MATAEKPVLTRYKDRMDKAVLSLKEDFAGLRTGRASSGLLDQIMVNAYGSMVQLNTVASISVPEPRQINVNIWDKGVVSAVEKAIRNSDLGLNPVVEGNNLRIPIPPLTEERRKDLVKIAGKYAEAQKVAVRNIRRDANDDLKKAEKASVISEDELKKMETEVQKITDGAIKQVDEALKTKEQEIMQV.

The protein belongs to the RRF family.

The protein localises to the cytoplasm. Its function is as follows. Responsible for the release of ribosomes from messenger RNA at the termination of protein biosynthesis. May increase the efficiency of translation by recycling ribosomes from one round of translation to another. The polypeptide is Ribosome-recycling factor (Caulobacter sp. (strain K31)).